A 402-amino-acid chain; its full sequence is Beta sliding clamp (402 aa).

This sequence belongs to the beta sliding clamp family. As to quaternary structure, forms a ring-shaped head-to-tail homodimer around DNA which binds and tethers DNA polymerases and other proteins to the DNA. The DNA replisome complex has a single clamp-loading complex (3 tau and 1 each of delta, delta', psi and chi subunits) which binds 3 Pol III cores (1 core on the leading strand and 2 on the lagging strand) each with a beta sliding clamp dimer. Additional proteins in the replisome are other copies of gamma, psi and chi, Ssb, DNA helicase and RNA primase.

The protein localises to the cytoplasm. Functionally, confers DNA tethering and processivity to DNA polymerases and other proteins. Acts as a clamp, forming a ring around DNA (a reaction catalyzed by the clamp-loading complex) which diffuses in an ATP-independent manner freely and bidirectionally along dsDNA. Initially characterized for its ability to contact the catalytic subunit of DNA polymerase III (Pol III), a complex, multichain enzyme responsible for most of the replicative synthesis in bacteria; Pol III exhibits 3'-5' exonuclease proofreading activity. The beta chain is required for initiation of replication as well as for processivity of DNA replication. This is Beta sliding clamp (dnaN) from Mycobacterium tuberculosis (strain CDC 1551 / Oshkosh).